A 923-amino-acid chain; its full sequence is Phosphoenolpyruvate carboxylase (923 aa).

Catalysis depends on residues His149 and Lys585.

Belongs to the PEPCase type 1 family. Mg(2+) is required as a cofactor.

It catalyses the reaction oxaloacetate + phosphate = phosphoenolpyruvate + hydrogencarbonate. Its function is as follows. Forms oxaloacetate, a four-carbon dicarboxylic acid source for the tricarboxylic acid cycle. The chain is Phosphoenolpyruvate carboxylase from Nocardia farcinica (strain IFM 10152).